We begin with the raw amino-acid sequence, 238 residues long: Tetraspanin-8 (238 aa).

Residues 1-9 lie on the Cytoplasmic side of the membrane; sequence MAGVNVCIK. The chain crosses the membrane as a helical span at residues 10-33; that stretch reads CSMFIFNFVFWLCGAIILSVAISI. The Extracellular segment spans residues 34–57; the sequence is RAGKIGQEILAPGDADLNLFIAVN. Residues 58–72 form a helical membrane-spanning segment; that stretch reads ILIFVGAVIMILGFL. Over 73-83 the chain is Cytoplasmic; the sequence is GCCGAMKENQF. The helical transmembrane segment at 84–109 threads the bilayer; it reads MMILFFVGLLMILLLQVAAGIVATTR. Residues 110 to 206 are Extracellular-facing; it reads KSKTEQALNK…ASISQMFSKR (97 aa). The N-linked (GlcNAc...) asparagine glycan is linked to Asn118. Residues 207-231 form a helical membrane-spanning segment; it reads LFIVLALAFGLAAIEVLGLIFSIVL. Residues 232-238 are Cytoplasmic-facing; it reads YCQMRKK.

Belongs to the tetraspanin (TM4SF) family. Forms homooligomers. Interacts with MEP1B. Interacts with integrin alpha3/ITGA3. Interacts with RICTOR and MTOR. Interacts with ADAM17. Interacts with ECE1.

It is found in the cell membrane. In terms of biological role, structural component of specialized membrane microdomains known as tetraspanin-enriched microdomains (TERMs), which act as platforms for receptor clustering and signaling. Participates thereby in diverse biological functions such as cell signal transduction, migration and protein trafficking. Promotes ADAM17-mediated TNF-alpha processing through recruitment of ADAM17 to tetraspanin-enriched micro-domains (TEMs). Forms a complex with RICTOR and integrin alpha3/ITGA3 to mediate mTORC2 activation and AKT1 phosphorylation leading to cell migration. Reduces apoptosis and autophagy induced by high glucose levels through forming a complex with mTOR and RICTOR. Contributes to the maintenance of intestinal epithelial barrier and plays a role in the regulation of intestine inflammation by switching interferon gamma receptor 1/IFNGR1 from clathrin-dependent to lipid raft-dependent endocytosis route to limit STAT1 activation magnitude and duration. Acts as a modulator of the endothelin axis by associating with endothelin converting enzyme ECE1 and regulating its activity of conversion of the endothelin-1 precursor to endothelin. This Bos taurus (Bovine) protein is Tetraspanin-8 (TSPAN8).